The following is a 232-amino-acid chain: Ubiquinone biosynthesis O-methyltransferase (232 aa).

S-adenosyl-L-methionine is bound by residues Arg-36, Gly-55, Asp-76, and Met-120.

It belongs to the methyltransferase superfamily. UbiG/COQ3 family.

The catalysed reaction is a 3-demethylubiquinol + S-adenosyl-L-methionine = a ubiquinol + S-adenosyl-L-homocysteine + H(+). The enzyme catalyses a 3-(all-trans-polyprenyl)benzene-1,2-diol + S-adenosyl-L-methionine = a 2-methoxy-6-(all-trans-polyprenyl)phenol + S-adenosyl-L-homocysteine + H(+). It functions in the pathway cofactor biosynthesis; ubiquinone biosynthesis. Its function is as follows. O-methyltransferase that catalyzes the 2 O-methylation steps in the ubiquinone biosynthetic pathway. This is Ubiquinone biosynthesis O-methyltransferase from Burkholderia orbicola (strain MC0-3).